Here is a 187-residue protein sequence, read N- to C-terminus: Phospholipase A2-gamma (187 aa).

Positions 1 to 25 (MITGLALSRVAFGLTAFLLLAVVSS) are cleaved as a signal peptide. 6 cysteine pairs are disulfide-bonded: Cys29/Cys56, Cys33/Cys62, Cys38/Cys115, Cys49/Cys69, Cys68/Cys93, and Cys75/Cys86. Residues Tyr48, Gly50, and Tyr53 each contribute to the Ca(2+) site. Residue His72 is part of the active site. Residue Asp73 coordinates Ca(2+).

It belongs to the phospholipase A2 family. The cofactor is Ca(2+). Strongly expressed in mature flowers but weakly expressed in other tissues. Detected in buds, open flowers and in pollen.

The protein resides in the secreted. Its subcellular location is the golgi apparatus. The protein localises to the trans-Golgi network. It is found in the endoplasmic reticulum. The enzyme catalyses a 1,2-diacyl-sn-glycero-3-phosphocholine + H2O = a 1-acyl-sn-glycero-3-phosphocholine + a fatty acid + H(+). PA2 catalyzes the calcium-dependent hydrolysis of the 2-acyl groups in 3-sn-phosphoglycerides. Releases lysophospholipids (LPLs) and free fatty acids (FFAs) from membrane phospholipids in response to hormones and other external stimuli. Plays a role in pollen development and germination and tube growth. The chain is Phospholipase A2-gamma (PLA2-GAMMA) from Arabidopsis thaliana (Mouse-ear cress).